Reading from the N-terminus, the 393-residue chain is 4-O-methyl-glucuronoyl methylesterase (393 aa).

The first 19 residues, 1–19 (MKLSAALLAIAAFANVASA), serve as a signal peptide directing secretion. A Pyrrolidone carboxylic acid modification is found at Gln-20. Residues Cys-22 and Cys-56 are joined by a disulfide bond. N-linked (GlcNAc...) asparagine glycosylation is found at Asn-103 and Asn-168. The GXSYXG catalytic site motif signature appears at 203–208 (GCSRNG). 2 disulfide bridges follow: Cys-204–Cys-340 and Cys-236–Cys-312. The active-site Nucleophile is the Ser-205. Residues Lys-209, Gln-251, Glu-259, and Trp-303 each coordinate substrate. Catalysis depends on His-339, which acts as the Proton donor/acceptor.

This sequence belongs to the carbohydrate esterase 15 (CE15) family.

Its subcellular location is the secreted. It catalyses the reaction a 4-O-methyl-alpha-D-glucuronosyl ester derivative + H2O = 4-O-methyl-alpha-D-glucuronate derivative + an alcohol + H(+). In terms of biological role, glucuronoyl esterase which may play a significant role in biomass degradation, as it is considered to disconnect hemicellulose from lignin through the hydrolysis of the ester bond between 4-O-methyl-D-glucuronic acid residues of glucuronoxylans and aromatic alcohols of lignin. This Schizophyllum commune (strain H4-8 / FGSC 9210) (Split gill fungus) protein is 4-O-methyl-glucuronoyl methylesterase.